The following is a 303-amino-acid chain: MQKVIQVNNQKLKQMAHYYSQFSSKKVPTGALFSISSGSATVTGYYSGKVMFQGKTASAEAAKWQSNSIHSLDTPKKMSTTLPADFANWSVLGSDEVGAGAYFGPLTTAAVYVSQENLEWVRALGIADSKTLTDDRMKKIAPQIIAKLPHHVVNLMPEKYNQLQPLHNVNQMKAISHNFALGKVLDKISPITPQAILIDQFAQQSTYFNYLKNAKQQRIIHENVYFTTKGEQYHLSVAAASILARVVELDAMSKLSVEAGIKLPIGAGREVDTVAAELLRRGIDLKHYAKLHFANTKKAERLL.

The 215-residue stretch at 89–303 folds into the RNase H type-2 domain; sequence WSVLGSDEVG…ANTKKAERLL (215 aa). Residues Asp-95, Glu-96, and Asp-199 each coordinate a divalent metal cation.

The protein belongs to the RNase HII family. RnhC subfamily. Mn(2+) is required as a cofactor. Mg(2+) serves as cofactor.

The protein localises to the cytoplasm. The enzyme catalyses Endonucleolytic cleavage to 5'-phosphomonoester.. Endonuclease that specifically degrades the RNA of RNA-DNA hybrids. In Leuconostoc mesenteroides subsp. mesenteroides (strain ATCC 8293 / DSM 20343 / BCRC 11652 / CCM 1803 / JCM 6124 / NCDO 523 / NBRC 100496 / NCIMB 8023 / NCTC 12954 / NRRL B-1118 / 37Y), this protein is Ribonuclease HIII.